We begin with the raw amino-acid sequence, 245 residues long: 3-deoxy-manno-octulosonate cytidylyltransferase (245 aa).

Belongs to the KdsB family.

It localises to the cytoplasm. It carries out the reaction 3-deoxy-alpha-D-manno-oct-2-ulosonate + CTP = CMP-3-deoxy-beta-D-manno-octulosonate + diphosphate. The protein operates within nucleotide-sugar biosynthesis; CMP-3-deoxy-D-manno-octulosonate biosynthesis; CMP-3-deoxy-D-manno-octulosonate from 3-deoxy-D-manno-octulosonate and CTP: step 1/1. It functions in the pathway bacterial outer membrane biogenesis; lipopolysaccharide biosynthesis. Its function is as follows. Activates KDO (a required 8-carbon sugar) for incorporation into bacterial lipopolysaccharide in Gram-negative bacteria. The sequence is that of 3-deoxy-manno-octulosonate cytidylyltransferase from Fusobacterium nucleatum subsp. nucleatum (strain ATCC 25586 / DSM 15643 / BCRC 10681 / CIP 101130 / JCM 8532 / KCTC 2640 / LMG 13131 / VPI 4355).